Reading from the N-terminus, the 1040-residue chain is Multidrug resistance protein MdtB (1040 aa).

12 helical membrane-spanning segments follow: residues 16-36 (FIMR…AGII), 347-367 (LMMA…NIPA), 369-389 (IIPG…MVFL), 396-416 (LTLM…IVVI), 440-460 (IGFT…PLLF), 472-492 (FAIT…TLTP), 537-557 (WLTL…WVFI), 863-883 (LGST…VLGI), 888-908 (FIHP…ALLA), 911-931 (IAGS…IGIV), 968-988 (ILMT…STGV), and 998-1018 (IGMV…TPVI).

Belongs to the resistance-nodulation-cell division (RND) (TC 2.A.6) family. MdtB subfamily. Part of a tripartite efflux system composed of MdtA, MdtB and MdtC. MdtB forms a heteromultimer with MdtC.

It localises to the cell inner membrane. The protein is Multidrug resistance protein MdtB of Shigella boydii serotype 18 (strain CDC 3083-94 / BS512).